We begin with the raw amino-acid sequence, 1483 residues long: Cystic fibrosis transmembrane conductance regulator (1483 aa).

Residues 1-77 (MQRSPLEKAS…KLINALRRCF (77 aa)) lie on the Cytoplasmic side of the membrane. A helical membrane pass occupies residues 78 to 98 (FWRFAFYGILLYLGEVTKAVQ). The region spanning 81–365 (FAFYGILLYL…WAVQTWYDSL (285 aa)) is the ABC transmembrane type-1 1 domain. The Extracellular portion of the chain corresponds to 99 to 122 (PLLLGRIIASYDPDNKQERSIAIY). A helical transmembrane segment spans residues 123 to 146 (LAIGLCLLFIMRPLLLHPAIFGLH). Residues 147-195 (HIGMQIRIAMFSLIYKKTLKLSSRVLDKISIGQLVSLLSNNLNKFDEGL) lie on the Cytoplasmic side of the membrane. A helical membrane pass occupies residues 196–216 (ALAHFVWIAPLQVTLLMGLLW). The Extracellular segment spans residues 217-222 (DLLQAS). Residues 223 to 243 (AFCGLAFLIVLALVQAGLGRM) traverse the membrane as a helical segment. Residues 244-298 (IMKYRDQRAGKINERLVITSEVIENIQSVKAYCWEEAMEKIIENIRQTELKLTRK) lie on the Cytoplasmic side of the membrane. The helical transmembrane segment at 299–319 (AAHVRYFNSSAFFFSGFFVVS) threads the bilayer. Residues 320-339 (LSVLPYALIKTIILRKIFTT) lie on the Extracellular side of the membrane. A helical transmembrane segment spans residues 340–358 (ISFCIVLRMAVTRQFPWAV). Residues 359–859 (QTWYDSLGAI…YLRYITVHKN (501 aa)) lie on the Cytoplasmic side of the membrane. Residues Trp401, Ser434, 458 to 465 (GSTGAGKT), and Gln493 contribute to the ATP site. Residues 423–646 (NGDNSLFFSN…RPDFSSKLMG (224 aa)) enclose the ABC transporter 1 domain. A lipid anchor (S-palmitoyl cysteine) is attached at Cys524. Ser549 and Ser660 each carry phosphoserine. Positions 654 to 832 (SPERRNSIIT…EEINEEDLKE (179 aa)) are disordered R region. The residue at position 670 (Ser670) is a Phosphoserine; by PKA. Ser686 carries the post-translational modification Phosphoserine. Lys688 participates in a covalent cross-link: Glycyl lysine isopeptide (Lys-Gly) (interchain with G-Cter in ubiquitin). 2 positions are modified to phosphoserine: Ser700 and Ser712. Thr717 is modified (phosphothreonine). 5 positions are modified to phosphoserine: Ser737, Ser768, Ser791, Ser796, and Ser814. A helical membrane pass occupies residues 860 to 880 (LIFVLIWCLVIFLAEVAVSLV). One can recognise an ABC transmembrane type-1 2 domain in the interval 860-1156 (LIFVLIWCLV…AVNSSIEVDS (297 aa)). Residues 881-919 (VLWILRNLSSQDKGNSTQSVNSSYAVIFTSTSAYYIFYI) lie on the Extracellular side of the membrane. N-linked (GlcNAc...) asparagine glycosylation is found at Asn887, Asn895, and Asn901. The discontinuously helical transmembrane segment at 920 to 940 (YVGVADTLLALGLFRGLPLVH) threads the bilayer. At 941 to 991 (TLITVSKILHHKMLHSVLQAPMSTLNTLKAGGILNRFSKDIAILDDLLPLT) the chain is on the cytoplasmic side. The helical transmembrane segment at 992 to 1012 (IFDFIQLLLIVIGAVAVVSVL) threads the bilayer. The Extracellular portion of the chain corresponds to 1013 to 1014 (QP). The chain crosses the membrane as a helical span at residues 1015 to 1035 (YIFLATVPVIAAFIILRAYFL). At 1036 to 1096 (HTSQQLKQLE…TANWFLYLST (61 aa)) the chain is on the cytoplasmic side. The chain crosses the membrane as a helical span at residues 1097–1117 (LRWFQMRMEIIFVIFFIAVTF). Over 1118–1131 (ISILTTGEGEGTVG) the chain is Extracellular. A helical membrane pass occupies residues 1132-1152 (IILTLAMNIMGTLQWAVNSSI). At 1153 to 1483 (EVDSLMRSVS…TEDEVQDTRL (331 aa)) the chain is on the cytoplasmic side. In terms of domain architecture, ABC transporter 2 spans 1213–1446 (MTVKDLTAKY…RSAFRQAIGP (234 aa)). Residues Tyr1222 and 1247–1254 (GRTGSGKS) contribute to the ATP site. Residues 1389 to 1483 (RTLKQAFADC…TEDEVQDTRL (95 aa)) are interaction with GORASP2. A lipid anchor (S-palmitoyl cysteine) is attached at Cys1398. The disordered stretch occupies residues 1444–1483 (IGPPERPGLLPHRLSSRQRSPSRIAALKEETEDEVQDTRL). Ser1459 carries the post-translational modification Phosphoserine. The segment covering 1473–1483 (ETEDEVQDTRL) has biased composition (acidic residues). The short motif at 1481-1483 (TRL) is the PDZ-binding element.

Belongs to the ABC transporter superfamily. ABCC family. CFTR transporter (TC 3.A.1.202) subfamily. As to quaternary structure, monomer; does not require oligomerization for channel activity. May form oligomers in the membrane. Interacts with SLC26A3, SLC26A6 and NHERF1. Interacts with SHANK2. Interacts with MYO6. Interacts (via C-terminus) with GOPC (via PDZ domain); this promotes CFTR internalization and thereby decreases channel activity. Interacts with SLC4A7 through NHERF1. Found in a complex with MYO5B and RAB11A. Interacts with ANO1. Interacts with SLC26A8. Interacts with AHCYL1; the interaction increases CFTR activity. Interacts with CSE1L. The core-glycosylated form interacts with GORASP2 (via PDZ GRASP-type 1 domain) in respone to ER stress. Interacts with MARCHF2; the interaction leads to CFTR ubiqtuitination and degradation. Interacts with ADGRG2. N-glycosylated. In terms of processing, phosphorylated; cAMP treatment promotes phosphorylation and activates the channel. Dephosphorylation decreases the ATPase activity (in vitro). Phosphorylation at PKA sites activates the channel. Phosphorylation at PKC sites enhances the response to phosphorylation by PKA. Phosphorylated by AMPK; this inhibits channel activity. Post-translationally, ubiquitinated, leading to its degradation in the lysosome. Deubiquitination by USP10 in early endosomes enhances its endocytic recycling to the cell membrane. Ubiquitinated by RNF185 during ER stress. Ubiquitinated by MARCHF2.

It localises to the apical cell membrane. Its subcellular location is the early endosome membrane. The protein resides in the cell membrane. The protein localises to the recycling endosome membrane. It is found in the endoplasmic reticulum membrane. It localises to the nucleus. It catalyses the reaction ATP + H2O + closed Cl(-) channel = ADP + phosphate + open Cl(-) channel.. The enzyme catalyses chloride(in) = chloride(out). The catalysed reaction is hydrogencarbonate(in) = hydrogencarbonate(out). It carries out the reaction ATP + H2O = ADP + phosphate + H(+). In terms of biological role, epithelial ion channel that plays an important role in the regulation of epithelial ion and water transport and fluid homeostasis. Mediates the transport of chloride ions across the cell membrane. Possesses an intrinsic ATPase activity and utilizes ATP to gate its channel; the passive flow of anions through the channel is gated by cycles of ATP binding and hydrolysis by the ATP-binding domains. The ion channel is also permeable to HCO(3)(-); selectivity depends on the extracellular chloride concentration. Exerts its function also by modulating the activity of other ion channels and transporters. Contributes to the regulation of the pH and the ion content of the epithelial fluid layer. Modulates the activity of the epithelial sodium channel (ENaC) complex, in part by regulating the cell surface expression of the ENaC complex. May regulate bicarbonate secretion and salvage in epithelial cells by regulating the transporter SLC4A7. Can inhibit the chloride channel activity of ANO1. Plays a role in the chloride and bicarbonate homeostasis during sperm epididymal maturation and capacitation. The sequence is that of Cystic fibrosis transmembrane conductance regulator from Canis lupus familiaris (Dog).